The following is a 261-amino-acid chain: UPF0328 protein ECU06_0100 (261 aa).

Belongs to the UPF0328 family.

The sequence is that of UPF0328 protein ECU06_0100 from Encephalitozoon cuniculi (strain GB-M1) (Microsporidian parasite).